The following is a 279-amino-acid chain: GDT1-like protein 3 (279 aa).

The signal sequence occupies residues 1 to 23 (MDPNPRLLILLVLLAFSATVAVA). The next 6 helical transmembrane spans lie at 64–84 (VGPG…VSEI), 103–123 (IVLS…TGLG), 135–155 (TNSA…YIAW), 186–206 (FFGR…FLAE), 224–244 (AIGV…LAVI), and 258–278 (VATI…FYPP).

Belongs to the GDT1 family.

It is found in the membrane. In Oryza sativa subsp. japonica (Rice), this protein is GDT1-like protein 3.